The following is a 161-amino-acid chain: uncharacterized protein (161 aa).

Positions 1-23 (MKKFAFLTALFAACYLPNAYAHA) form a signal peptide, or 21. A helical transmembrane segment spans residues 129 to 149 (IYLHDILGGIGYIVGIAGLIA).

It is found in the membrane. This is an uncharacterized protein from Haemophilus influenzae (strain ATCC 51907 / DSM 11121 / KW20 / Rd).